The sequence spans 581 residues: MRMSLLFYRTSKNANKEASVLSYELLQKAGYLFKTSKGIYSYTPLFQRVILKMTEIIREELNAIGGQEVCLPLLQPAELWEKTGRWKAFLSEKLLYVLKDRENKAMCLAPTHEEVVSEFVAQWLTGREQLPIHLYQIGTKFRDEIRPRFGLMRAKEFLMEDSYTFSDSPEQMEEQYAKLRLAYQRIFDRLNLKYVIVAADGGKIGKGKSEEFHVLCSLGEDTICVSGSYGANVEAAQAIPPSYVYDSNLLPVEEVATPNIRTIEDLEVFFNTPKHKILKTLVVKTCQKDSEKFFAICIRGDRQINLTKVASFLQVDDCELASEEEILKHLHVEKGFIGPLYCPIPCYADETTRPMTNFICANNQKDVHCKHVNWGRDIPLPAFGDFLLAEAGDLCPQNGGAPYEIFQGVEVAHIFNLGTRYTESFSVGFQDKNGDKQLCWMGTYGIGVGRTLAACIEQLADNKGLVWPLAVAPFSITILYNGGDTEGEATALQLYQSLNTEGFEPLLDDRNERLGFKLKDSDLLGIPYKLIIGKSFQSTGLLEIESRSGEKCNVSPENLLDWCSKNLPCHTRKIPPLREQN.

It belongs to the class-II aminoacyl-tRNA synthetase family. ProS type 1 subfamily. Homodimer.

The protein localises to the cytoplasm. It catalyses the reaction tRNA(Pro) + L-proline + ATP = L-prolyl-tRNA(Pro) + AMP + diphosphate. Functionally, catalyzes the attachment of proline to tRNA(Pro) in a two-step reaction: proline is first activated by ATP to form Pro-AMP and then transferred to the acceptor end of tRNA(Pro). As ProRS can inadvertently accommodate and process non-cognate amino acids such as alanine and cysteine, to avoid such errors it has two additional distinct editing activities against alanine. One activity is designated as 'pretransfer' editing and involves the tRNA(Pro)-independent hydrolysis of activated Ala-AMP. The other activity is designated 'posttransfer' editing and involves deacylation of mischarged Ala-tRNA(Pro). The misacylated Cys-tRNA(Pro) is not edited by ProRS. In Chlamydia trachomatis serovar D (strain ATCC VR-885 / DSM 19411 / UW-3/Cx), this protein is Proline--tRNA ligase.